We begin with the raw amino-acid sequence, 663 residues long: CXXC-type zinc finger protein 1 (663 aa).

Residues 60-110 form a PHD-type zinc finger; the sequence is QAYCICRSSDCSRFMIGCDGCEEWYHGDCIGITEKEAKHIKQYYCRRCKKE. Residues 134–161 show a composition bias toward low complexity; the sequence is TSLNAPGVGPSGAAPAAAPVASATTSQQ. The disordered stretch occupies residues 134–183; the sequence is TSLNAPGVGPSGAAPAAAPVASATTSQQAPPPTTAAAKRKNSSAREPKMG. The CXXC-type zinc finger occupies 175-219; that stretch reads SSAREPKMGKRCGTCEGCRRPNCNQCDACRVRVGHKPRCIFRTCV. Positions 186, 189, 192, 197, 200, 203, 213, and 218 each coordinate Zn(2+). The tract at residues 230–254 is disordered; it reads QATQAGPSRKREKAAPKSRNVQVGP. S258 bears the Phosphoserine mark.

As to quaternary structure, component of the SET1 complex, composed at least of the catalytic subunit Set1, wds/WDR5, Wdr82, Rbbp5, ash2, Cfp1/CXXC1, hcf and Dpy-30L1.

Its subcellular location is the nucleus. Component of the SET1 complex that specifically di- and trimethylates 'Lys-4' of histone H3. Essential for Set1 association with chromatin and trimethylation of histone H3 at 'Lys-4' at transcription puffs. Additionally, is critical for general chromosomal association of Set1. In Drosophila melanogaster (Fruit fly), this protein is CXXC-type zinc finger protein 1 (Cfp1).